Reading from the N-terminus, the 125-residue chain is Insulin growth factor-like family member 3 (125 aa).

Residues 1-24 (MRPRCCILALVCWITVFLLQCSKG) form the signal peptide.

The protein belongs to the IGFL family. In terms of tissue distribution, detected in the cerebellum.

It is found in the secreted. Potential ligand of the IGFLR1 cell membrane receptor. This Homo sapiens (Human) protein is Insulin growth factor-like family member 3 (IGFL3).